The chain runs to 310 residues: Small ribosomal subunit biogenesis GTPase RsgA (310 aa).

The 162-residue stretch at 77–238 (LSKQSHILAA…IIDTPGIKGF (162 aa)) folds into the CP-type G domain. GTP-binding positions include 126–129 (NKVD) and 180–188 (GHSGVGKST). Cys-262, Cys-267, His-269, and Cys-275 together coordinate Zn(2+).

This sequence belongs to the TRAFAC class YlqF/YawG GTPase family. RsgA subfamily. As to quaternary structure, monomer. Associates with 30S ribosomal subunit, binds 16S rRNA. Requires Zn(2+) as cofactor.

It is found in the cytoplasm. One of several proteins that assist in the late maturation steps of the functional core of the 30S ribosomal subunit. Helps release RbfA from mature subunits. May play a role in the assembly of ribosomal proteins into the subunit. Circularly permuted GTPase that catalyzes slow GTP hydrolysis, GTPase activity is stimulated by the 30S ribosomal subunit. In Bacteroides fragilis (strain ATCC 25285 / DSM 2151 / CCUG 4856 / JCM 11019 / LMG 10263 / NCTC 9343 / Onslow / VPI 2553 / EN-2), this protein is Small ribosomal subunit biogenesis GTPase RsgA.